Reading from the N-terminus, the 525-residue chain is MERLNELCDIIEQNPKQFLDKLPWICQQCPQSKLLRAESPRFSQSHLNAILAVTRILSKIVDTTDENAKFVVLDFLQTVPKSFHRSFWPYSLSLESISAFYCSFLGYVSCLSQLMVEGYLLRAAQRSDIFAHTLIWHLQGESVEEIVKDGAFDKNASFQEILSDVRQHIVDGFTPKALNFFSREFDFFEKVTSISGALLPLPKEERVAGIRRELEKIKMQGEDLYLPTAPNKLVRVIQVDSGIPLQSAAKVPIMITFNVVDLDGDHNDVKPQACIFKVGDDCRQDVLALQVISLLGDIFQAVGLNLYLFPYGVLPTVVPNTRSRSQMGETTDGGLYEIFQQNYGLVGSTTFETARANFLISSAGYAVASLLLQPKDRHNGNLLFDDVGRLVHIDFGFILETSPGGNMRFENAHFKLSHEMTQLLDPSGVMKSKTWHQFVSLCVKGYLAARRYMDEIISTVQMMLESGLPCFSRGDPIGNLRKRFHPEMSEREAALFMINVCTDAYNKWTTAGYDLIQYLQQGVEK.

Residues 163–278 (SDVRQHIVDG…VKPQACIFKV (116 aa)) are pleckstrin homology (PH) domain conferring phosphoinositide binding specificity. The region spanning 239 to 509 (VDSGIPLQSA…VCTDAYNKWT (271 aa)) is the PI3K/PI4K catalytic domain. Residues 245–251 (LQSAAKV) form a G-loop region. The catalytic loop stretch occupies residues 373 to 381 (QPKDRHNGN). The activation loop stretch occupies residues 392–417 (HIDFGFILETSPGGNMRFENAHFKLS).

This sequence belongs to the PI3/PI4-kinase family. Type III PI4K subfamily.

It localises to the membrane. It catalyses the reaction a 1,2-diacyl-sn-glycero-3-phospho-(1D-myo-inositol) + ATP = a 1,2-diacyl-sn-glycero-3-phospho-(1D-myo-inositol 4-phosphate) + ADP + H(+). Acts on phosphatidylinositol (PtdIns) in the first committed step in the production of the second messenger inositol-1,4,5,-trisphosphate. This is Phosphatidylinositol 4-kinase alpha 2 (PI4KA2) from Arabidopsis thaliana (Mouse-ear cress).